Consider the following 317-residue polypeptide: Adenine deaminase (317 aa).

Residues H14, H16, and H194 each contribute to the Zn(2+) site. E197 (proton donor) is an active-site residue. D275 serves as a coordination point for Zn(2+). Residue D276 participates in substrate binding.

The protein belongs to the metallo-dependent hydrolases superfamily. Adenosine and AMP deaminases family. Adenine deaminase type 2 subfamily. The cofactor is Zn(2+).

It catalyses the reaction adenine + H2O + H(+) = hypoxanthine + NH4(+). Its function is as follows. Catalyzes the hydrolytic deamination of adenine to hypoxanthine. Plays an important role in the purine salvage pathway and in nitrogen catabolism. In Pseudomonas syringae pv. tomato (strain ATCC BAA-871 / DC3000), this protein is Adenine deaminase.